A 243-amino-acid polypeptide reads, in one-letter code: UDP-2,3-diacylglucosamine hydrolase (243 aa).

Asp-9, His-11, Asp-42, Asn-79, and His-114 together coordinate Mn(2+). 79-80 (NR) contributes to the substrate binding site. Residues Asp-122, Ser-160, Asn-164, and His-195 each coordinate substrate. 2 residues coordinate Mn(2+): His-195 and His-197.

It belongs to the LpxH family. It depends on Mn(2+) as a cofactor.

Its subcellular location is the cell inner membrane. It catalyses the reaction UDP-2-N,3-O-bis[(3R)-3-hydroxytetradecanoyl]-alpha-D-glucosamine + H2O = 2-N,3-O-bis[(3R)-3-hydroxytetradecanoyl]-alpha-D-glucosaminyl 1-phosphate + UMP + 2 H(+). The protein operates within glycolipid biosynthesis; lipid IV(A) biosynthesis; lipid IV(A) from (3R)-3-hydroxytetradecanoyl-[acyl-carrier-protein] and UDP-N-acetyl-alpha-D-glucosamine: step 4/6. In terms of biological role, hydrolyzes the pyrophosphate bond of UDP-2,3-diacylglucosamine to yield 2,3-diacylglucosamine 1-phosphate (lipid X) and UMP by catalyzing the attack of water at the alpha-P atom. Involved in the biosynthesis of lipid A, a phosphorylated glycolipid that anchors the lipopolysaccharide to the outer membrane of the cell. In Coxiella burnetii (strain RSA 331 / Henzerling II), this protein is UDP-2,3-diacylglucosamine hydrolase.